Consider the following 489-residue polypeptide: UBX domain-containing protein 7 (489 aa).

A2 is modified (N-acetylalanine). One can recognise a UBA domain in the interval 2-54 (AAHGGSAASSALKGLIQQFTTITGASESVGKHMLEACNNNLEMAVTMFLDGGG). Residues 56-77 (AEEPSTSSASVSTVRPHTEEEV) form a disordered region. Residues 59–70 (PSTSSASVSTVR) show a composition bias toward polar residues. Residue K84 forms a Glycyl lysine isopeptide (Lys-Gly) (interchain with G-Cter in SUMO2) linkage. K99 participates in a covalent cross-link: Glycyl lysine isopeptide (Lys-Gly) (interchain with G-Cter in ubiquitin). Residue K134 forms a Glycyl lysine isopeptide (Lys-Gly) (interchain with G-Cter in SUMO2) linkage. Phosphoserine is present on residues S278, S280, S285, and S288. Residues 285–304 (SEDSQLEAAIRASLQETHFD) enclose the UIM domain. The span at 300–309 (ETHFDSTQTK) shows a compositional bias: polar residues. The tract at residues 300-384 (ETHFDSTQTK…PGTATNHQGL (85 aa)) is disordered. T306 carries the phosphothreonine modification. Positions 352–366 (HKDLGHRKEENRRPL) are enriched in basic and acidic residues. The UBX domain occupies 408 to 485 (VNGPKAQLML…GLCPQETVFV (78 aa)).

In terms of assembly, interacts with neddylated CUL2, ubiquitinated HIF1A, and VCP/p97.

The protein resides in the nucleus. Its function is as follows. Ubiquitin-binding adapter that links a subset of NEDD8-associated cullin ring ligases (CRLs) to the segregase VCP/p97, to regulate turnover of their ubiquitination substrates. The chain is UBX domain-containing protein 7 (UBXN7) from Homo sapiens (Human).